Here is a 75-residue protein sequence, read N- to C-terminus: MGMPSMPELLIVLAIVVLLFGAKKIPDLAKGMGKGIKDFKKAIKEDDEEEEVKEITKKEEPKVEAAAEEKKSENA.

A helical membrane pass occupies residues 1–21; sequence MGMPSMPELLIVLAIVVLLFG. The disordered stretch occupies residues 47–75; the sequence is DEEEEVKEITKKEEPKVEAAAEEKKSENA. Over residues 53-75 the composition is skewed to basic and acidic residues; it reads KEITKKEEPKVEAAAEEKKSENA.

Belongs to the TatA/E family. As to quaternary structure, the Tat system comprises two distinct complexes: a TatABC complex, containing multiple copies of TatA, TatB and TatC subunits, and a separate TatA complex, containing only TatA subunits. Substrates initially bind to the TatABC complex, which probably triggers association of the separate TatA complex to form the active translocon.

It is found in the cell inner membrane. Its function is as follows. Part of the twin-arginine translocation (Tat) system that transports large folded proteins containing a characteristic twin-arginine motif in their signal peptide across membranes. TatA could form the protein-conducting channel of the Tat system. This is Sec-independent protein translocase protein TatA from Sulfurovum sp. (strain NBC37-1).